The chain runs to 123 residues: Small ribosomal subunit protein uS12 (123 aa).

Positions 1-32 (MPTIQQLVRKGRKTKVSKNKTPALKGSPQRRG) are disordered. Over residues 9-18 (RKGRKTKVSK) the composition is skewed to basic residues. A 3-methylthioaspartic acid modification is found at Asp89.

It belongs to the universal ribosomal protein uS12 family. Part of the 30S ribosomal subunit. Contacts proteins S8 and S17. May interact with IF1 in the 30S initiation complex.

In terms of biological role, with S4 and S5 plays an important role in translational accuracy. Its function is as follows. Interacts with and stabilizes bases of the 16S rRNA that are involved in tRNA selection in the A site and with the mRNA backbone. Located at the interface of the 30S and 50S subunits, it traverses the body of the 30S subunit contacting proteins on the other side and probably holding the rRNA structure together. The combined cluster of proteins S8, S12 and S17 appears to hold together the shoulder and platform of the 30S subunit. The polypeptide is Small ribosomal subunit protein uS12 (Thermobifida fusca (strain YX)).